A 116-amino-acid polypeptide reads, in one-letter code: Ribosome-binding factor A (116 aa).

This sequence belongs to the RbfA family. As to quaternary structure, monomer. Binds 30S ribosomal subunits, but not 50S ribosomal subunits or 70S ribosomes.

The protein resides in the cytoplasm. One of several proteins that assist in the late maturation steps of the functional core of the 30S ribosomal subunit. Associates with free 30S ribosomal subunits (but not with 30S subunits that are part of 70S ribosomes or polysomes). Required for efficient processing of 16S rRNA. May interact with the 5'-terminal helix region of 16S rRNA. This chain is Ribosome-binding factor A, found in Streptococcus equi subsp. zooepidemicus (strain H70).